Here is a 288-residue protein sequence, read N- to C-terminus: Protease HtpX (288 aa).

2 consecutive transmembrane segments (helical) span residues 5–25 (IALFLATNLAVLILASIVMSL) and 34–54 (SGLLVMAGIFGFGGSFISLLL). A Zn(2+)-binding site is contributed by His140. Glu141 is a catalytic residue. His144 contributes to the Zn(2+) binding site. Transmembrane regions (helical) follow at residues 155–175 (LLQGVLNTFVIVLARVVGGII) and 190–210 (FAYFIIVFVLEMVFGLFATMI). Glu219 serves as a coordination point for Zn(2+).

Belongs to the peptidase M48B family. Requires Zn(2+) as cofactor.

It localises to the cell inner membrane. The chain is Protease HtpX from Stenotrophomonas maltophilia (strain R551-3).